We begin with the raw amino-acid sequence, 552 residues long: uncharacterized protein (552 aa).

One can recognise a DhaL domain in the interval 8–200 (KLFAEMIIQG…LAIVYAGFLK (193 aa)).

This is an uncharacterized protein from Staphylococcus saprophyticus subsp. saprophyticus (strain ATCC 15305 / DSM 20229 / NCIMB 8711 / NCTC 7292 / S-41).